Consider the following 123-residue polypeptide: MSWIEPIISHFCQDLGVPTSSPLSPLIQLEMAQSGTLQLEQHGATLTLWLARSLAWHRCEDAMVKALTLTAAQKSGALPLRAGWLGESQLVLFVSLDERSLTLPLLHQAFEQLLRLQQEVLAP.

As to quaternary structure, interacts with YscB to form a complex which specifically binds to YopN.

The protein localises to the cytoplasm. The protein resides in the cell inner membrane. Its function is as follows. Functions as a specific chaperone for YopN. It could facilitate the secretion and the subsequent translocation of YopN. The polypeptide is Chaperone protein SycN (sycN) (Yersinia pseudotuberculosis serotype I (strain IP32953)).